The chain runs to 332 residues: Serpentine receptor class gamma-3 (332 aa).

7 helical membrane-spanning segments follow: residues 23 to 43 (FAYL…IWVS), 72 to 92 (LIFT…SEIV), 101 to 121 (IYYC…IFIA), 144 to 164 (IMLI…LISD), 184 to 204 (WASL…ITMV), 231 to 251 (AALI…FAFF), and 263 to 283 (YLRF…LLLV).

The protein belongs to the nematode receptor-like protein srg family.

It localises to the membrane. This chain is Serpentine receptor class gamma-3 (srg-3), found in Caenorhabditis elegans.